The chain runs to 414 residues: MPHEPLNSYRSGPDERGHFGIFGGRFVAETLMPLILDLEKHYALARVDPAFKAELDGLLTHYVGRPSPLYYAERLTEHVRAIAAHAGGRGGAKVYFKREELNHTGAHKINNVLGQILLARRMGKTRIIAETGAGQHGVATATACARFGLECVIYMGAVDVERQKPNVFRMNLLGAKVVPVQSGARTLKDAMNEALRDWVTNVTDTFYCIGTAAGPHPYPAMVRDFQCVIGEETRTQMLEREGRLPDSLFACIGGGSNAIGLFHPFLDEPNVEIYGVEAAGFGLDKQHAASLAGGRPGVLHGNRTYLLMDADGQIEEGHSISAGLDYPGIGPEHAWLKETGRVTYLSARDDEALDAFQLCAKLEGIIPALEPAHALAKVVEVAPSKPRDHLLVVNISGRGDKDIFTVADYLAPVG.

Residue lysine 108 is modified to N6-(pyridoxal phosphate)lysine.

It belongs to the TrpB family. Tetramer of two alpha and two beta chains. It depends on pyridoxal 5'-phosphate as a cofactor.

It catalyses the reaction (1S,2R)-1-C-(indol-3-yl)glycerol 3-phosphate + L-serine = D-glyceraldehyde 3-phosphate + L-tryptophan + H2O. It functions in the pathway amino-acid biosynthesis; L-tryptophan biosynthesis; L-tryptophan from chorismate: step 5/5. Functionally, the beta subunit is responsible for the synthesis of L-tryptophan from indole and L-serine. In Beijerinckia indica subsp. indica (strain ATCC 9039 / DSM 1715 / NCIMB 8712), this protein is Tryptophan synthase beta chain.